Consider the following 118-residue polypeptide: Eukaryotic translation initiation factor 4E-binding protein 1 (118 aa).

Ser2 carries the N-acetylserine modification. The segment at 27-48 is disordered; it reads VQLPPGDYSTTPGGTLFSTTPG. Residues 34 to 48 are compositionally biased toward polar residues; sequence YSTTPGGTLFSTTPG. Thr37 is modified (phosphothreonine; by MTOR). Position 41 is a phosphothreonine (Thr41). The residue at position 44 (Ser44) is a Phosphoserine. Thr46 carries the phosphothreonine; by MTOR modification. Thr50 carries the post-translational modification Phosphothreonine. Tyr54 is subject to Phosphotyrosine. The YXXXXLphi motif signature appears at 54–60; it reads YDRKFLM. Lys57 participates in a covalent cross-link: Glycyl lysine isopeptide (Lys-Gly) (interchain with G-Cter in ubiquitin). The segment at 64–118 is disordered; that stretch reads NSPVTKTPPRDLPTIPGVTSPTGDEPPTEARQNHLRSSPEDKPAGGEESQFEMDI. At Ser65 the chain carries Phosphoserine; by DYRK2, MAPK1, MAPK3 and MTOR. Residue Thr70 is modified to Phosphothreonine; by MTOR. Thr77 carries the phosphothreonine modification. Phosphoserine occurs at positions 83 and 100. A Phosphoserine; by DYRK2 modification is found at Ser101. A Phosphoserine modification is found at Ser112. Positions 114–118 match the TOS motif motif; that stretch reads FEMDI.

It belongs to the eIF4E-binding protein family. In terms of assembly, hypophosphorylated EIF4EBP1 competes with EIF4G1/EIF4G3 to interact with EIF4E; insulin stimulated MAP-kinase (MAPK1 and MAPK3) or mTORC1 phosphorylation of EIF4EBP1 causes dissociation of the complex allowing EIF4G1/EIF4G3 to bind and consequent initiation of translation. Interacts (via TOS motif) with RPTOR; promoting phosphorylation by mTORC1. Post-translationally, phosphorylated on serine and threonine residues in response to insulin, EGF and PDGF. Phosphorylation at Thr-37, Thr-46, Ser-65 and Thr-70, corresponding to the hyperphosphorylated form, is regulated by mTORC1 and abolishes binding to EIF4E. In terms of processing, ubiquitinated: when eIF4E levels are low, hypophosphorylated form is ubiquitinated by the BCR(KLHL25) complex, leading to its degradation and serving as a homeostatic mechanism to maintain translation and prevent eIF4E inhibition when eIF4E levels are low. Not ubiquitinated when hyperphosphorylated (at Thr-37, Thr-46, Ser-65 and Thr-70) or associated with eIF4E.

The protein resides in the cytoplasm. The protein localises to the nucleus. In terms of biological role, repressor of translation initiation that regulates EIF4E activity by preventing its assembly into the eIF4F complex: hypophosphorylated form competes with EIF4G1/EIF4G3 and strongly binds to EIF4E, leading to repress translation. In contrast, hyperphosphorylated form dissociates from EIF4E, allowing interaction between EIF4G1/EIF4G3 and EIF4E, leading to initiation of translation. Mediates the regulation of protein translation by hormones, growth factors and other stimuli that signal through the MAP kinase and mTORC1 pathways. This is Eukaryotic translation initiation factor 4E-binding protein 1 (EIF4EBP1) from Bos taurus (Bovine).